The sequence spans 377 residues: Phosphatidylglycerol--prolipoprotein diacylglyceryl transferase (377 aa).

4 helical membrane-spanning segments follow: residues 18–38 (PVPL…AVVV), 48–68 (MDPA…IVGA), 93–113 (IWNG…GAWL), and 119–139 (GISL…AQAI). R141 contacts a 1,2-diacyl-sn-glycero-3-phospho-(1'-sn-glycerol). Helical transmembrane passes span 177–197 (QPTF…LLLV), 208–228 (LFAL…MLRI), and 238–258 (RVNI…LLVV). The interval 265–377 (DVSPQEQRAL…RTRVERPPAT (113 aa)) is disordered. Low complexity-rich tracts occupy residues 288-297 (AAGETAGETR) and 308-344 (GVDV…DADG).

The protein belongs to the Lgt family.

Its subcellular location is the cell membrane. The enzyme catalyses L-cysteinyl-[prolipoprotein] + a 1,2-diacyl-sn-glycero-3-phospho-(1'-sn-glycerol) = an S-1,2-diacyl-sn-glyceryl-L-cysteinyl-[prolipoprotein] + sn-glycerol 1-phosphate + H(+). The protein operates within protein modification; lipoprotein biosynthesis (diacylglyceryl transfer). Catalyzes the transfer of the diacylglyceryl group from phosphatidylglycerol to the sulfhydryl group of the N-terminal cysteine of a prolipoprotein, the first step in the formation of mature lipoproteins. This is Phosphatidylglycerol--prolipoprotein diacylglyceryl transferase from Frankia alni (strain DSM 45986 / CECT 9034 / ACN14a).